Here is a 143-residue protein sequence, read N- to C-terminus: Large ribosomal subunit protein uL11 (143 aa).

The protein belongs to the universal ribosomal protein uL11 family. As to quaternary structure, part of the ribosomal stalk of the 50S ribosomal subunit. Interacts with L10 and the large rRNA to form the base of the stalk. L10 forms an elongated spine to which L12 dimers bind in a sequential fashion forming a multimeric L10(L12)X complex. Post-translationally, one or more lysine residues are methylated.

Functionally, forms part of the ribosomal stalk which helps the ribosome interact with GTP-bound translation factors. In Thioalkalivibrio sulfidiphilus (strain HL-EbGR7), this protein is Large ribosomal subunit protein uL11.